The primary structure comprises 570 residues: Sulfite reductase [NADPH] hemoprotein beta-component (570 aa).

Residues C434, C440, C479, and C483 each contribute to the [4Fe-4S] cluster site. C483 lines the siroheme pocket.

It belongs to the nitrite and sulfite reductase 4Fe-4S domain family. Alpha(8)-beta(8). The alpha component is a flavoprotein, the beta component is a hemoprotein. The cofactor is siroheme. [4Fe-4S] cluster is required as a cofactor.

It catalyses the reaction hydrogen sulfide + 3 NADP(+) + 3 H2O = sulfite + 3 NADPH + 4 H(+). The protein operates within sulfur metabolism; hydrogen sulfide biosynthesis; hydrogen sulfide from sulfite (NADPH route): step 1/1. In terms of biological role, component of the sulfite reductase complex that catalyzes the 6-electron reduction of sulfite to sulfide. This is one of several activities required for the biosynthesis of L-cysteine from sulfate. This Escherichia coli O7:K1 (strain IAI39 / ExPEC) protein is Sulfite reductase [NADPH] hemoprotein beta-component.